Consider the following 274-residue polypeptide: Large ribosomal subunit protein uL2 (274 aa).

The segment at 223–274 (VAMNPVDHPHGGGEGRTSGGRHPVTPWGVPTKGYKTRSNKRTDKYIVRRRTK) is disordered.

It belongs to the universal ribosomal protein uL2 family. In terms of assembly, part of the 50S ribosomal subunit. Forms a bridge to the 30S subunit in the 70S ribosome.

Its function is as follows. One of the primary rRNA binding proteins. Required for association of the 30S and 50S subunits to form the 70S ribosome, for tRNA binding and peptide bond formation. It has been suggested to have peptidyltransferase activity; this is somewhat controversial. Makes several contacts with the 16S rRNA in the 70S ribosome. The chain is Large ribosomal subunit protein uL2 from Shewanella amazonensis (strain ATCC BAA-1098 / SB2B).